A 70-amino-acid chain; its full sequence is Small ribosomal subunit protein bS21 (70 aa).

It belongs to the bacterial ribosomal protein bS21 family.

This chain is Small ribosomal subunit protein bS21, found in Azoarcus sp. (strain BH72).